The primary structure comprises 239 residues: Phosphoribosylaminoimidazole-succinocarboxamide synthase (239 aa).

This sequence belongs to the SAICAR synthetase family.

It catalyses the reaction 5-amino-1-(5-phospho-D-ribosyl)imidazole-4-carboxylate + L-aspartate + ATP = (2S)-2-[5-amino-1-(5-phospho-beta-D-ribosyl)imidazole-4-carboxamido]succinate + ADP + phosphate + 2 H(+). Its pathway is purine metabolism; IMP biosynthesis via de novo pathway; 5-amino-1-(5-phospho-D-ribosyl)imidazole-4-carboxamide from 5-amino-1-(5-phospho-D-ribosyl)imidazole-4-carboxylate: step 1/2. This is Phosphoribosylaminoimidazole-succinocarboxamide synthase from Nitratiruptor sp. (strain SB155-2).